Reading from the N-terminus, the 236-residue chain is Proteasome subunit beta type-1 (236 aa).

This sequence belongs to the peptidase T1B family. As to quaternary structure, the 26S proteasome consists of a 20S proteasome core and two 19S regulatory subunits. The 20S proteasome core is composed of 28 subunits that are arranged in four stacked rings, resulting in a barrel-shaped structure. The two end rings are each formed by seven alpha subunits, and the two central rings are each formed by seven beta subunits. The catalytic chamber with the active sites is on the inside of the barrel.

It localises to the cytoplasm. The protein localises to the nucleus. Functionally, non-catalytic component of the proteasome, a multicatalytic proteinase complex which is characterized by its ability to cleave peptides with Arg, Phe, Tyr, Leu, and Glu adjacent to the leaving group at neutral or slightly basic pH. The proteasome has an ATP-dependent proteolytic activity. This is Proteasome subunit beta type-1 (psmB1) from Dictyostelium discoideum (Social amoeba).